Consider the following 134-residue polypeptide: Calcitonin gene-related peptide 2 (134 aa).

Residues 1–26 form the signal peptide; it reads MDFWKFFPFLALSSMWVLCLASSLQA. The propeptide occupies 27-86; it reads APFRSALESSLDLGTLSDQEKHLLLAALIQDYEQKARKLEQEEQETEGSRKGSSSSVISQ. Residues 65 to 91 form a disordered region; sequence LEQEEQETEGSRKGSSSSVISQKRSCN. Residues 77–89 show a composition bias toward low complexity; the sequence is KGSSSSVISQKRS. Cys90 and Cys95 are joined by a disulfide. Phe125 is subject to Phenylalanine amide. Positions 131-134 are excised as a propeptide; that stretch reads DLRV.

This sequence belongs to the calcitonin family.

It is found in the secreted. CALCB/CGRP2 is a peptide hormone that induces vasodilation mediated by the CALCRL-RAMP1 receptor complex. Dilates a variety of vessels including the coronary, cerebral and systemic vasculature. Its abundance in the CNS also points toward a neurotransmitter or neuromodulator role. The sequence is that of Calcitonin gene-related peptide 2 from Rattus norvegicus (Rat).